A 190-amino-acid chain; its full sequence is Adenylate kinase (190 aa).

11–16 serves as a coordination point for ATP; the sequence is GSGKGT. Residues 31–60 are NMP; sequence STGDVLRGEMKAETELGKIAKDYIEKGQLV. Residues Thr-32, Arg-37, 58–60, 86–89, and Gln-93 contribute to the AMP site; these read QLV and GFPR. Residues 127-137 form an LID region; sequence ERGKVSGRSDD. Arg-128 serves as a coordination point for ATP. AMP-binding residues include Arg-134 and Arg-145. Gly-173 is an ATP binding site.

This sequence belongs to the adenylate kinase family. Monomer.

Its subcellular location is the cytoplasm. The catalysed reaction is AMP + ATP = 2 ADP. Its pathway is purine metabolism; AMP biosynthesis via salvage pathway; AMP from ADP: step 1/1. Catalyzes the reversible transfer of the terminal phosphate group between ATP and AMP. Plays an important role in cellular energy homeostasis and in adenine nucleotide metabolism. The polypeptide is Adenylate kinase (Parabacteroides distasonis (strain ATCC 8503 / DSM 20701 / CIP 104284 / JCM 5825 / NCTC 11152)).